The following is a 381-amino-acid chain: Tetraacyldisaccharide 4'-kinase (381 aa).

ATP is bound at residue 78-85 (AVGGTGKT).

It belongs to the LpxK family.

It catalyses the reaction a lipid A disaccharide + ATP = a lipid IVA + ADP + H(+). It functions in the pathway glycolipid biosynthesis; lipid IV(A) biosynthesis; lipid IV(A) from (3R)-3-hydroxytetradecanoyl-[acyl-carrier-protein] and UDP-N-acetyl-alpha-D-glucosamine: step 6/6. Transfers the gamma-phosphate of ATP to the 4'-position of a tetraacyldisaccharide 1-phosphate intermediate (termed DS-1-P) to form tetraacyldisaccharide 1,4'-bis-phosphate (lipid IVA). This is Tetraacyldisaccharide 4'-kinase from Syntrophobacter fumaroxidans (strain DSM 10017 / MPOB).